A 319-amino-acid polypeptide reads, in one-letter code: Chromoplast-specific carotenoid-associated protein C2, chromoplastic (319 aa).

The N-terminal 55 residues, 1–55 (MTSIAFCNAFTVNPFLAAARRSPPPLTPLTSVALSPARKPRILAIFHPRTFPSFR), are a transit peptide targeting the chromoplast.

The protein belongs to the PAP/fibrillin family.

It is found in the plastid. Its subcellular location is the chromoplast. Functionally, may be involved in carotenoid sequestration within chromoplasts. The sequence is that of Chromoplast-specific carotenoid-associated protein C2, chromoplastic (CHRC2) from Oncidium hybrid cultivar (Orchid).